Reading from the N-terminus, the 980-residue chain is Phosphoenolpyruvate carboxylase (980 aa).

Catalysis depends on residues His-182 and Lys-625.

It belongs to the PEPCase type 1 family. Mg(2+) serves as cofactor.

It catalyses the reaction oxaloacetate + phosphate = phosphoenolpyruvate + hydrogencarbonate. Functionally, forms oxaloacetate, a four-carbon dicarboxylic acid source for the tricarboxylic acid cycle. This Bordetella pertussis (strain Tohama I / ATCC BAA-589 / NCTC 13251) protein is Phosphoenolpyruvate carboxylase.